The primary structure comprises 195 residues: Molybdenum cofactor guanylyltransferase (195 aa).

Residues 12–14 (LAG), lysine 25, asparagine 53, aspartate 70, and aspartate 100 each bind GTP. Aspartate 100 lines the Mg(2+) pocket.

This sequence belongs to the MobA family. Monomer. Requires Mg(2+) as cofactor.

The protein localises to the cytoplasm. The catalysed reaction is Mo-molybdopterin + GTP + H(+) = Mo-molybdopterin guanine dinucleotide + diphosphate. Its function is as follows. Transfers a GMP moiety from GTP to Mo-molybdopterin (Mo-MPT) cofactor (Moco or molybdenum cofactor) to form Mo-molybdopterin guanine dinucleotide (Mo-MGD) cofactor. The sequence is that of Molybdenum cofactor guanylyltransferase from Vibrio parahaemolyticus serotype O3:K6 (strain RIMD 2210633).